Here is a 123-residue protein sequence, read N- to C-terminus: Protein LLP homolog (123 aa).

Basic residues predominate over residues 1–21; it reads MAKSIRSKWKRKMRAEKRKKN. Disordered stretches follow at residues 1–23 and 55–123; these read MAKS…KNAP and KINE…KLAW. Over residues 70–89 the composition is skewed to basic and acidic residues; that stretch reads DSSKMDMELKRNKKNLRDQH. The segment covering 100-123 has biased composition (basic residues); sequence QQKKLKSQCGKKKGKSKQAKKLAW.

Belongs to the learning-associated protein family.

The protein localises to the nucleus. It localises to the nucleolus. Its subcellular location is the chromosome. Functionally, regulates dendritic and spine growth and synaptic transmission. The protein is Protein LLP homolog (llph) of Xenopus tropicalis (Western clawed frog).